Reading from the N-terminus, the 40-residue chain is Small polypeptide DEVIL 6 (40 aa).

Positions 9-40 are required for DVL/RTFL small polypeptide activity; that stretch reads SSSRGLGGVLREQRAKLYIIKRCVVMLLCWQD. The helical transmembrane segment at 12–28 threads the bilayer; that stretch reads RGLGGVLREQRAKLYII.

Belongs to the DVL/RTFL small polypeptides family.

It localises to the cell membrane. Its function is as follows. Small polypeptide acting as a regulatory molecule which coordinates cellular responses required for differentiation, growth and development, probably by restricting polar cell proliferation in lateral organs and coordinating socket cell recruitment and differentiation at trichome sites. This is Small polypeptide DEVIL 6 from Arabidopsis thaliana (Mouse-ear cress).